Consider the following 346-residue polypeptide: Actin-like protein 10 (346 aa).

This sequence belongs to the actin family.

This chain is Actin-like protein 10 (Actl10), found in Mus musculus (Mouse).